The chain runs to 152 residues: Photosystem II extrinsic protein U, chloroplastic (152 aa).

Residues methionine 1 to serine 35 constitute a chloroplast transit peptide. The N-terminal 24 residues, arginine 36–alanine 59, are a transit peptide targeting the thylakoid.

This sequence belongs to the PsbU family. As to quaternary structure, PSII is composed of 1 copy each of membrane proteins PsbA, PsbB, PsbC, PsbD, PsbE, PsbF, PsbH, PsbI, PsbJ, PsbK, PsbL, PsbM, PsbT, PsbX, PsbY, PsbZ, Psb30/Ycf12, at least 3 peripheral proteins of the oxygen-evolving complex and a large number of cofactors. It forms dimeric complexes. The oxygen-evolving complex in red algae is composed of PsbO (OEC33), PsbQ', cytochrome c-550 and PsbU. Predicted to be translocated into the thylakoid lumen by the Tat system.

The protein resides in the plastid. It is found in the chloroplast thylakoid membrane. Functionally, one of the extrinsic, lumenal subunits of photosystem II (PSII). PSII is a light-driven water plastoquinone oxidoreductase, using light energy to abstract electrons from H(2)O, generating a proton gradient subsequently used for ATP formation. The extrinsic proteins stabilize the structure of photosystem II oxygen-evolving complex (OEC), the ion environment of oxygen evolution and protect the OEC against heat-induced inactivation. In Pyropia yezoensis (Susabi-nori), this protein is Photosystem II extrinsic protein U, chloroplastic.